Reading from the N-terminus, the 155-residue chain is Small ribosomal subunit protein uS7 (155 aa).

The protein belongs to the universal ribosomal protein uS7 family. In terms of assembly, part of the 30S ribosomal subunit. Contacts proteins S9 and S11.

One of the primary rRNA binding proteins, it binds directly to 16S rRNA where it nucleates assembly of the head domain of the 30S subunit. Is located at the subunit interface close to the decoding center, probably blocks exit of the E-site tRNA. This is Small ribosomal subunit protein uS7 from Corynebacterium glutamicum (strain R).